A 190-amino-acid chain; its full sequence is Shikimate kinase (190 aa).

26 to 31 (GSGKST) contacts ATP. Serine 30 contributes to the Mg(2+) binding site. Aspartate 48, arginine 72, and glycine 94 together coordinate substrate. An ATP-binding site is contributed by arginine 133. Arginine 152 is a binding site for substrate.

It belongs to the shikimate kinase family. As to quaternary structure, monomer. Requires Mg(2+) as cofactor.

It is found in the cytoplasm. It catalyses the reaction shikimate + ATP = 3-phosphoshikimate + ADP + H(+). It functions in the pathway metabolic intermediate biosynthesis; chorismate biosynthesis; chorismate from D-erythrose 4-phosphate and phosphoenolpyruvate: step 5/7. Functionally, catalyzes the specific phosphorylation of the 3-hydroxyl group of shikimic acid using ATP as a cosubstrate. This chain is Shikimate kinase, found in Prochlorococcus marinus (strain SARG / CCMP1375 / SS120).